We begin with the raw amino-acid sequence, 164 residues long: Protein-export protein SecB (164 aa).

It belongs to the SecB family. In terms of assembly, homotetramer, a dimer of dimers. One homotetramer interacts with 1 SecA dimer.

It is found in the cytoplasm. In terms of biological role, one of the proteins required for the normal export of preproteins out of the cell cytoplasm. It is a molecular chaperone that binds to a subset of precursor proteins, maintaining them in a translocation-competent state. It also specifically binds to its receptor SecA. This chain is Protein-export protein SecB, found in Janthinobacterium sp. (strain Marseille) (Minibacterium massiliensis).